The chain runs to 779 residues: Lon protease (779 aa).

The region spanning 7 to 190 (VPVLFLNDSI…LLIGWTGDHL (184 aa)) is the Lon N-terminal domain. 352-359 (GPPGVGKT) is a binding site for ATP. In terms of domain architecture, Lon proteolytic spans 589-769 (TAVPGVATGL…ADIIAAALEP (181 aa)). Residues S675 and K718 contribute to the active site.

The protein belongs to the peptidase S16 family. In terms of assembly, homohexamer. Organized in a ring with a central cavity. Oligomerization is Mg(2+)-dependent.

It is found in the cytoplasm. It carries out the reaction Hydrolysis of proteins in presence of ATP.. Stimulated by unfolded protein. ATP-dependent serine protease that mediates the selective degradation of mutant and abnormal proteins as well as certain short-lived regulatory proteins. Required for cellular homeostasis and for survival from DNA damage and developmental changes induced by stress. Degrades polypeptides processively to yield small peptide fragments that are 5 to 10 amino acids long. Binds to DNA in a double-stranded, site-specific manner. The polypeptide is Lon protease (Mycolicibacterium smegmatis (Mycobacterium smegmatis)).